Here is a 335-residue protein sequence, read N- to C-terminus: 3-hydroxyisobutyrate dehydrogenase, mitochondrial (335 aa).

A mitochondrion-targeting transit peptide spans 1–35 (MAASLGFRGAASGLWYWSGRRRPVGSLAAVCSRSM). 39–68 (TPVGFIGLGNMGNPMAKNLMKHGYPLILYD) is an NAD(+) binding site. An N6-acetyllysine; alternate mark is found at Lys-59, Lys-75, and Lys-78. Lys-59, Lys-75, and Lys-78 each carry N6-succinyllysine; alternate. Lys-94 bears the N6-succinyllysine mark. NAD(+)-binding positions include 102–103 (LP) and Asn-107. Position 120 is an N6-acetyllysine (Lys-120). Thr-133 serves as a coordination point for NAD(+). Residue Lys-140 is modified to N6-succinyllysine. Lys-144 carries the post-translational modification N6-acetyllysine. Lys-148 is modified (N6-acetyllysine; alternate). Lys-148 is subject to N6-succinyllysine; alternate. Lys-208 is a catalytic residue. An N6-acetyllysine; alternate mark is found at Lys-237 and Lys-241. 2 positions are modified to N6-succinyllysine; alternate: Lys-237 and Lys-241. Lys-283 serves as a coordination point for NAD(+). Residue Lys-296 is modified to N6-succinyllysine. Lys-320 is subject to N6-acetyllysine; alternate. Lys-320 carries the post-translational modification N6-succinyllysine; alternate.

The protein belongs to the HIBADH-related family. 3-hydroxyisobutyrate dehydrogenase subfamily. Homodimer.

The protein resides in the mitochondrion. It carries out the reaction 3-hydroxy-2-methylpropanoate + NAD(+) = 2-methyl-3-oxopropanoate + NADH + H(+). The protein operates within amino-acid degradation; L-valine degradation. This is 3-hydroxyisobutyrate dehydrogenase, mitochondrial (Hibadh) from Mus musculus (Mouse).